The chain runs to 209 residues: Large ribosomal subunit protein uL4 (209 aa).

Residues 45 to 80 (RQGTHKAKERSELSGSTRKLIRQKGSGGARRGDINS) are disordered.

It belongs to the universal ribosomal protein uL4 family. Part of the 50S ribosomal subunit.

Its function is as follows. One of the primary rRNA binding proteins, this protein initially binds near the 5'-end of the 23S rRNA. It is important during the early stages of 50S assembly. It makes multiple contacts with different domains of the 23S rRNA in the assembled 50S subunit and ribosome. Functionally, forms part of the polypeptide exit tunnel. The chain is Large ribosomal subunit protein uL4 from Porphyromonas gingivalis (strain ATCC BAA-308 / W83).